A 286-amino-acid polypeptide reads, in one-letter code: Transcription factor egl-46 (286 aa).

The C2H2-type 1; atypical zinc finger occupies 180 to 200 (CICRLCKVKYEDVFKLAQHKC). 2 C2H2-type zinc fingers span residues 208 to 230 (YKCPDCDKVFSCPANLASHRRWH) and 248 to 271 (VSCSTCFNSFPTKKMLKLHSSTCQ).

The protein belongs to the INSM1 family. Interacts (via C-terminus) with egl-44 (via N-terminus); the interaction is direct; the interaction may regulate transcription. Expressed in touch cells, HSN cells, ventral cord motor neurons and ciliated ray neurons.

The protein resides in the nucleus. Functionally, transcription factor. Represses expression of genes involved in differentiation of touch receptor neurons (TRN), probably acting as a heterodimer with egl-44, perhaps by occupying similar cis-regulatory elements as an unc-86/mec-3 heterodimer. Plays a role in cell fate specification of neurons, including the hook neuron HOB, the gas-sensing neuron BAG and touch receptor neurons. Plays a role in neuron differentiation by repressing the expression of zag-1 in FLP neurons, probably acting as a heterodimer with egl-44; because zag-1 represses expression of egl-46 and egl-44, together these proteins form a bistable, negative-feedback loop that regulates the choice between neuronal fates. Acts downstream of egl-44 to prevent touch cell differentiation in FLP neurons. Involved in male mating behavior, acting in concert with egl-44, via modulation of expression of polycystins lov-1 and pkd-2, homeodomain protein ceh-26, and neuropeptide-like protein nlp-8. Modulates the expression of a subset of terminal differentiation genes involved in O(2)- and CO(2)-sensing, acting in parallel to ets-5 and egl-13. May act upstream of RFX transcription factor daf-19 to regulate gene expression specifically in the HOB neuron. Plays a role in specifying commissural dendrites of the PVD nociceptive neurons, acting in concert with egl-44. In association with egl-44, regulates cell cycle exit in the neuronal Q cell lineage. In Caenorhabditis elegans, this protein is Transcription factor egl-46.